The chain runs to 1488 residues: Chromosome partition protein MukB (1488 aa).

G34 to S41 is an ATP binding site. Coiled coils occupy residues L326–Q418, L444–H472, and R509–P602. Residues P666 to R783 are flexible hinge. Coiled-coil stretches lie at residues E835–E923, E977–G1116, and V1209–V1265. Residues A1049–R1074 form a disordered region. The span at S1051–H1065 shows a compositional bias: basic and acidic residues.

The protein belongs to the SMC family. MukB subfamily. As to quaternary structure, homodimerization via its hinge domain. Binds to DNA via its C-terminal region. Interacts, and probably forms a ternary complex, with MukE and MukF via its C-terminal region. The complex formation is stimulated by calcium or magnesium. Interacts with tubulin-related protein FtsZ.

The protein localises to the cytoplasm. The protein resides in the nucleoid. Plays a central role in chromosome condensation, segregation and cell cycle progression. Functions as a homodimer, which is essential for chromosome partition. Involved in negative DNA supercoiling in vivo, and by this means organize and compact chromosomes. May achieve or facilitate chromosome segregation by condensation DNA from both sides of a centrally located replisome during cell division. The chain is Chromosome partition protein MukB from Salmonella heidelberg (strain SL476).